The primary structure comprises 777 residues: Santalene and bergamotene synthase, chloroplastic (777 aa).

A chloroplast-targeting transit peptide spans 1–36; that stretch reads MIVGYRSTIITLSHPKLGNGKTISSNAIFQRSCRVR. Aspartate 530 and aspartate 534 together coordinate Mg(2+). Residues 530–534 carry the DDXXD motif motif; that stretch reads DDQFD.

Belongs to the terpene synthase family. Tpse subfamily. The cofactor is Mg(2+). It depends on Mn(2+) as a cofactor.

Its subcellular location is the plastid. It is found in the chloroplast. The enzyme catalyses (2Z,6Z)-farnesyl diphosphate = (+)-alpha-santalene + diphosphate. It catalyses the reaction (2Z,6Z)-farnesyl diphosphate = (+)-endo-beta-bergamotene + diphosphate. The catalysed reaction is (2Z,6Z)-farnesyl diphosphate = (1S,5S,6S)-alpha-bergamotene + diphosphate. In terms of biological role, (2Z,6Z)-farnesyl diphosphate cyclizing enzyme. Produces (+)-alpha-santalene, (+)-endo-beta-bergamotene, (-)-endo-alpha-bergamotene, and at lower amounts, (-)exo-alpha-bergamotene and (+)-epi-beta-santalene. Not able to use geranyl diphosphate, E,E-farnesyl diphosphate or E,E,E-geranylgeranyl diphosphate as substrates, but able to use Neryl diphosphate to make the monoterpene terpineol. This chain is Santalene and bergamotene synthase, chloroplastic (SBS), found in Solanum habrochaites (Wild tomato).